A 211-amino-acid chain; its full sequence is tRNA (guanine-N(7)-)-methyltransferase (211 aa).

S-adenosyl-L-methionine is bound by residues E43, D68, and N117. Substrate contacts are provided by residues K121, D153, and 190-193 (TEYE).

Belongs to the class I-like SAM-binding methyltransferase superfamily. TrmB family.

It carries out the reaction guanosine(46) in tRNA + S-adenosyl-L-methionine = N(7)-methylguanosine(46) in tRNA + S-adenosyl-L-homocysteine. The protein operates within tRNA modification; N(7)-methylguanine-tRNA biosynthesis. Its function is as follows. Catalyzes the formation of N(7)-methylguanine at position 46 (m7G46) in tRNA. In Clostridium acetobutylicum (strain ATCC 824 / DSM 792 / JCM 1419 / IAM 19013 / LMG 5710 / NBRC 13948 / NRRL B-527 / VKM B-1787 / 2291 / W), this protein is tRNA (guanine-N(7)-)-methyltransferase.